The sequence spans 458 residues: MKASKGRNVVVVGTQWGDEGKGKLVDWLTESAQGVVRFQGGHNAGHTLVINGVKTALHLIPSGIMRPGVKCYIGNGVVLSAGKLFEEIEGLEKAGVEVRSRLRVSEACPLILPFHAALDVAREAAREHGGAEKIGTTGRGIGPAYEDKIARRALRVQDLKYPERFAAKLRELLALHNHVLSTFLGSANFQFGDALKPYITGGQVQFEPVFDEAMRHAEMLKPMMADVSRELNEAHAAGANLLFEGAQGTLLDVDHGTYPYVTSSNCVAGNAAAGSGVGPGHLHYILGITKAYCTRVGGGPFPTELDWETPGTPGYHMSTVGAEKGVTTGRSRRCGWFDAALLKRSAQVNGLSGLCITKLDVLDGLRELSLCVGYELDGERIDLLPMGAEEIARCVPIYENIAGWTESTVGVTRYEDLPSNARRYLERIEQVTGVPIAMISTSPDRDHTILMRHPYAAD.

Residues 17–23 and 45–47 contribute to the GTP site; these read GDEGKGK and GHT. Asp18 acts as the Proton acceptor in catalysis. Mg(2+) is bound by residues Asp18 and Gly45. IMP is bound by residues 18 to 21, 43 to 46, Thr137, Arg151, Gln247, Thr262, and Arg330; these read DEGK and NAGH. The active-site Proton donor is the His46. Position 326-332 (326-332) interacts with substrate; it reads VTTGRSR. GTP-binding positions include Arg332, 358–360, and 440–442; these read KLD and STS.

This sequence belongs to the adenylosuccinate synthetase family. Homodimer. Mg(2+) serves as cofactor.

The protein resides in the cytoplasm. The enzyme catalyses IMP + L-aspartate + GTP = N(6)-(1,2-dicarboxyethyl)-AMP + GDP + phosphate + 2 H(+). Its pathway is purine metabolism; AMP biosynthesis via de novo pathway; AMP from IMP: step 1/2. Its function is as follows. Plays an important role in the de novo pathway of purine nucleotide biosynthesis. Catalyzes the first committed step in the biosynthesis of AMP from IMP. This chain is Adenylosuccinate synthetase, found in Acidovorax ebreus (strain TPSY) (Diaphorobacter sp. (strain TPSY)).